The sequence spans 226 residues: MIDKSSADILEISAKCGYLTGLLKNVYRSANIIVTDMSPLLLDSFDHNHKLLIDDENLEFQKDSFDLIIYSLGLHWINDVQRFLYNIRTFLKSDGIFIGNFVGGDSLKNLRKSLIDNEIASGFKHSPHISPFIHFDHVPMLLLHAGFSEVIVDYENIALKFENPIVLMKEIKNIGESNALNSQHNYAISKKMFSLLKNYINVFEDNITLISFIAAPNKNSLRLKLL.

It belongs to the methyltransferase superfamily.

This is Putative methyltransferase RP459 from Rickettsia prowazekii (strain Madrid E).